We begin with the raw amino-acid sequence, 260 residues long: 3-deoxy-manno-octulosonate cytidylyltransferase (260 aa).

The protein belongs to the KdsB family.

The protein resides in the cytoplasm. It carries out the reaction 3-deoxy-alpha-D-manno-oct-2-ulosonate + CTP = CMP-3-deoxy-beta-D-manno-octulosonate + diphosphate. The protein operates within nucleotide-sugar biosynthesis; CMP-3-deoxy-D-manno-octulosonate biosynthesis; CMP-3-deoxy-D-manno-octulosonate from 3-deoxy-D-manno-octulosonate and CTP: step 1/1. It functions in the pathway bacterial outer membrane biogenesis; lipopolysaccharide biosynthesis. Its function is as follows. Activates KDO (a required 8-carbon sugar) for incorporation into bacterial lipopolysaccharide in Gram-negative bacteria. This is 3-deoxy-manno-octulosonate cytidylyltransferase from Polaromonas naphthalenivorans (strain CJ2).